The primary structure comprises 248 residues: Phosphoribosylformylglycinamidine synthase subunit PurQ (248 aa).

The 243-residue stretch at 6–248 folds into the Glutamine amidotransferase type-1 domain; the sequence is AMVLRMEGTN…IFFRILYNST (243 aa). Cysteine 95 acts as the Nucleophile in catalysis. Residues histidine 215 and glutamate 217 contribute to the active site.

As to quaternary structure, part of the FGAM synthase complex composed of 1 PurL, 1 PurQ and 2 PurS subunits.

The protein resides in the cytoplasm. The catalysed reaction is N(2)-formyl-N(1)-(5-phospho-beta-D-ribosyl)glycinamide + L-glutamine + ATP + H2O = 2-formamido-N(1)-(5-O-phospho-beta-D-ribosyl)acetamidine + L-glutamate + ADP + phosphate + H(+). It catalyses the reaction L-glutamine + H2O = L-glutamate + NH4(+). It functions in the pathway purine metabolism; IMP biosynthesis via de novo pathway; 5-amino-1-(5-phospho-D-ribosyl)imidazole from N(2)-formyl-N(1)-(5-phospho-D-ribosyl)glycinamide: step 1/2. Part of the phosphoribosylformylglycinamidine synthase complex involved in the purines biosynthetic pathway. Catalyzes the ATP-dependent conversion of formylglycinamide ribonucleotide (FGAR) and glutamine to yield formylglycinamidine ribonucleotide (FGAM) and glutamate. The FGAM synthase complex is composed of three subunits. PurQ produces an ammonia molecule by converting glutamine to glutamate. PurL transfers the ammonia molecule to FGAR to form FGAM in an ATP-dependent manner. PurS interacts with PurQ and PurL and is thought to assist in the transfer of the ammonia molecule from PurQ to PurL. The chain is Phosphoribosylformylglycinamidine synthase subunit PurQ from Picrophilus torridus (strain ATCC 700027 / DSM 9790 / JCM 10055 / NBRC 100828 / KAW 2/3).